Here is a 530-residue protein sequence, read N- to C-terminus: PTS system maltose-specific EIICB component (530 aa).

The PTS EIIC type-1 domain maps to 1–431 (MTAKTAPKVT…FNLKTPGRDS (431 aa)). A run of 10 helical transmembrane segments spans residues 22–42 (FMLP…GSSL), 69–89 (IGSF…PLGL), 96–116 (VAAF…NFWL), 138–158 (ILGI…GIIV), 189–209 (LVMG…AMGI), 289–309 (FLSQ…ALAM), 321–341 (IKGL…TEPL), 343–363 (FLFL…TGLG), 369–389 (VLGV…VFGI), and 399–419 (MVPV…RFAI). Residues 449–530 (GYNVPAILEA…MAGLMHTVQA (82 aa)) enclose the PTS EIIB type-1 domain. Catalysis depends on Cys471, which acts as the Phosphocysteine intermediate; for EIIB activity.

It localises to the cell inner membrane. The enzyme catalyses D-maltose(out) + N(pros)-phospho-L-histidyl-[protein] = alpha-maltose 6'-phosphate(in) + L-histidyl-[protein]. In terms of biological role, the phosphoenolpyruvate-dependent sugar phosphotransferase system (sugar PTS), a major carbohydrate active transport system, catalyzes the phosphorylation of incoming sugar substrates concomitantly with their translocation across the cell membrane. This system is involved in maltose transport. MalX can also recognize and transport glucose even though this sugar may not represent the natural substrate of the system. This chain is PTS system maltose-specific EIICB component, found in Escherichia coli (strain K12).